We begin with the raw amino-acid sequence, 522 residues long: MSEAEPVGEKGPAEDDGEESVPFNPFLHEFEPEGFWQKARFYILGFTLFPLRFLLAAIFLFLMWPIAALRVAGLTEEELSRSIRHRRTILHHLIYLLSRTMFFMCGFHWITIRGRRAPASEAPLLVVAPHSTFFDPIVTVVCDLPSVVSRVENLNIPVIGALLRFNQSILVSRQDPSSRKKVVEEVKKRATSNGDWPQVLFFPEGTNGNGKVLLKFKPGAFVAGVPVQPVLMRYPNKLPATIWTWKGNGVFKVLWLTMSQFYINLEIEFLPVYHPTAEERADPTLYASKVQKIMADALAKPATEFELIGDTPVTPVGHLKVALDPKIWELGNILEKAGFSLDSVQGLIDLCLEGVCSRVGLDELAEKLGVTQHDVISRVFNYFHKDASGMIDFREVSLVLAAQDATRSAEELAKLAFDLFSTCDADGRFLLSADGFAAILRSVVGSPPAESGKVFSELCTYTELHGLTQDGFVRFAIRHPCYRHLFLFYLRPPSSGRRKPPHIQQNGGCSGKNNPRNQSKMD.

A run of 2 helical transmembrane segments spans residues 43–63 and 92–112; these read ILGFTLFPLRFLLAAIFLFLM and HLIYLLSRTMFFMCGFHWITI. An HXXXXD motif motif is present at residues 130–135; the sequence is HSTFFD. Asn166 and Asn517 each carry an N-linked (GlcNAc...) asparagine glycan. The tract at residues 496 to 522 is disordered; it reads GRRKPPHIQQNGGCSGKNNPRNQSKMD. A compositionally biased stretch (polar residues) spans 503–522; it reads IQQNGGCSGKNNPRNQSKMD.

The protein belongs to the 1-acyl-sn-glycerol-3-phosphate acyltransferase family.

Its subcellular location is the endoplasmic reticulum membrane. The catalysed reaction is a 1-acyl-sn-glycero-3-phosphoethanolamine + an acyl-CoA = a 1,2-diacyl-sn-glycero-3-phosphoethanolamine + CoA. The enzyme catalyses a 1-O-(1Z-alkenyl)-sn-glycero-3-phosphoethanolamine + an acyl-CoA = a 1-O-(1Z-alkenyl)-2-acyl-sn-glycero-3-phosphoethanolamine + CoA. It carries out the reaction a 1-acyl-sn-glycero-3-phosphocholine + an acyl-CoA = a 1,2-diacyl-sn-glycero-3-phosphocholine + CoA. It catalyses the reaction a 1-O-alkyl-sn-glycero-3-phosphocholine + acetyl-CoA = a 1-O-alkyl-2-acetyl-sn-glycero-3-phosphocholine + CoA. The catalysed reaction is a 1-acyl-sn-glycero-3-phospho-L-serine + an acyl-CoA = a 1,2-diacyl-sn-glycero-3-phospho-L-serine + CoA. It participates in lipid metabolism; phospholipid metabolism. Functionally, displays acyl-CoA-dependent lysophospholipid acyltransferase activity with a subset of lysophospholipids as substrates. Prefers long chain acyl-CoAs (C16, C18) as acyl donors. The polypeptide is Lysophospholipid acyltransferase LPCAT4 (lpcat4) (Xenopus tropicalis (Western clawed frog)).